Reading from the N-terminus, the 483-residue chain is Sphingomyelin synthase-related 1 (483 aa).

The next 3 membrane-spanning stretches (helical) occupy residues 182-202 (LIAFAYSSLSFLMTSFVMVLV), 230-250 (FDMCETIGLVLAVVWFTVLFF), and 261-281 (MFSLLGTVFLLRCFTMLITSL). Residue histidine 330 is part of the active site. A helical transmembrane segment spans residues 349–369 (WTGLHTFTWVLNCFAIFLILA). Catalysis depends on residues histidine 373 and aspartate 377. Residues 376 to 396 (IDVFIAFYISSRMFLYYHAYA) traverse the membrane as a helical segment. Residues 397-483 (YNHAGITATD…NSKNHTKKHN (87 aa)) are Cytoplasmic-facing. Basic and acidic residues predominate over residues 450–461 (EPKITPKSDSSR). Positions 450–483 (EPKITPKSDSSRKRSSVVAAKQNGNSKNHTKKHN) are disordered.

It belongs to the sphingomyelin synthase family.

The protein localises to the membrane. This is Sphingomyelin synthase-related 1 from Caenorhabditis elegans.